We begin with the raw amino-acid sequence, 529 residues long: 1,4-beta-D-glucan cellobiohydrolase xynA (529 aa).

A signal peptide spans 1–25; the sequence is MSALNSFNMYKSALILGSLLATAGA. A catalytic region spans residues 26–456; the sequence is QQIGTYTAET…SDIKVGPFNS (431 aa). N-linked (GlcNAc...) asparagine glycosylation is found at Asn70 and Asn219. Glu234 functions as the Nucleophile in the catalytic mechanism. Catalysis depends on Glu239, which acts as the Proton donor. Asn413 carries N-linked (GlcNAc...) asparagine glycosylation. Residues 413 to 438 are disordered; it reads NETGTPGAARGSCPTTSGNPKTVESQ. The segment covering 425 to 438 has biased composition (polar residues); that stretch reads CPTTSGNPKTVESQ. N-linked (GlcNAc...) asparagine glycosylation is present at Asn455. The thr-rich linker stretch occupies residues 457–493; sequence TFSGGTSTGGSTTTTASGTTSTKASTTSTSSTSTGTG. The tract at residues 460-491 is disordered; sequence GGTSTGGSTTTTASGTTSTKASTTSTSSTSTG. The CBM1 domain maps to 493-529; the sequence is GVAAHWGQCGGQGWTGPTTCASGTTCTVVNPYYSQCL. 2 cysteine pairs are disulfide-bonded: Cys501/Cys518 and Cys512/Cys528.

It belongs to the glycosyl hydrolase 7 (cellulase C) family.

The protein resides in the secreted. The catalysed reaction is Hydrolysis of (1-&gt;4)-beta-D-glucosidic linkages in cellulose and cellotetraose, releasing cellobiose from the non-reducing ends of the chains.. Its activity is regulated as follows. Cellobiose inhibits xynA at high concentrations. In terms of biological role, the biological conversion of cellulose to glucose generally requires three types of hydrolytic enzymes: (1) Endoglucanases which cut internal beta-1,4-glucosidic bonds; (2) Exocellobiohydrolases that cut the disaccharide cellobiose from the non-reducing end of the cellulose polymer chain; (3) Beta-1,4-glucosidases which hydrolyze the cellobiose and other short cello-oligosaccharides to glucose. This chain is 1,4-beta-D-glucan cellobiohydrolase xynA (xynA), found in Talaromyces funiculosus (Fruitlet core rot fungus).